A 246-amino-acid chain; its full sequence is UL16-binding protein 2 (246 aa).

The N-terminal stretch at 1–25 (MAAAAATKILLCLPLLLLLSGWSRA) is a signal peptide. Residues 29–117 (DPHSLCYDIT…IQLENYTPKE (89 aa)) form an MHC class I alpha-1 like region. C50 and C66 are oxidised to a cystine. N68 and N82 each carry an N-linked (GlcNAc...) asparagine glycan. Positions 118-210 (PLTLQARMSC…MDSTLEPSAG (93 aa)) are MHC class I alpha-2 like. Residues C127 and C190 are joined by a disulfide bond. S216 is an a protein binding site. S217 carries GPI-anchor amidated serine lipidation. Residues 218-246 (GTTQLRATATTLILCCLLIILPCFILPGI) constitute a propeptide, removed in mature form.

It belongs to the MHC class I family. As to quaternary structure, interacts with KLRK1/NKG2D. Does not bind to beta2-microglobulin. In terms of assembly, (Microbial infection) In CMV-infected cells, interacts with the viral glycoprotein UL16; this interaction causes ULBP2 retention in the endoplasmic reticulum and cis-Golgi and prevents binding to and activation of KLRK1/NKG2D, providing CMV with an immune evasion mechanism. In terms of tissue distribution, expressed in various types of cancer cell lines and in the fetus, but not in normal tissues.

The protein resides in the cell membrane. It is found in the endoplasmic reticulum. The protein localises to the secreted. Its function is as follows. Binds and activates the KLRK1/NKG2D receptor, mediating natural killer cell cytotoxicity. This is UL16-binding protein 2 from Homo sapiens (Human).